A 176-amino-acid chain; its full sequence is Small ribosomal subunit protein uS5 (176 aa).

The 64-residue stretch at 11–74 folds into the S5 DRBM domain; that stretch reads LSEVLVDVNR…QAAKKRMMKV (64 aa).

The protein belongs to the universal ribosomal protein uS5 family. As to quaternary structure, part of the 30S ribosomal subunit. Contacts proteins S4 and S8.

Its function is as follows. With S4 and S12 plays an important role in translational accuracy. Located at the back of the 30S subunit body where it stabilizes the conformation of the head with respect to the body. This Rickettsia massiliae (strain Mtu5) protein is Small ribosomal subunit protein uS5.